The chain runs to 494 residues: Alpha-amylase-related protein (494 aa).

A signal peptide spans 1 to 20 (MIKFALALTLCLAGASLSLA). A Pyrrolidone carboxylic acid modification is found at Gln21. Cys48 and Cys104 are oxidised to a cystine. Ca(2+) is bound by residues Asn118, Gln169, and Asp178. Cys157 and Cys171 are joined by a disulfide. Arg206 is a chloride binding site. Asp208 acts as the Nucleophile in catalysis. His212 lines the Ca(2+) pocket. The Proton donor role is filled by Glu245. Chloride is bound by residues Asn308 and Arg343. 3 disulfides stabilise this stretch: Cys376/Cys382, Cys418/Cys441, and Cys448/Cys460.

Belongs to the glycosyl hydrolase 13 family. In terms of assembly, monomer. Requires Ca(2+) as cofactor. Chloride is required as a cofactor.

The protein localises to the secreted. It catalyses the reaction Endohydrolysis of (1-&gt;4)-alpha-D-glucosidic linkages in polysaccharides containing three or more (1-&gt;4)-alpha-linked D-glucose units.. The protein is Alpha-amylase-related protein (Amyrel) of Drosophila bakoue (Fruit fly).